Consider the following 151-residue polypeptide: Neuroglobin (151 aa).

The Globin domain occupies Met-1 to Asp-149. Heme b-binding residues include His-64 and His-96.

It belongs to the globin family. As to quaternary structure, monomer. Homodimer and homotetramer; disulfide-linked. Mainly monomeric but also detected as part of homodimers and homotetramers. Interacts with 14-3-3 proteins; regulates the phosphorylation of NGB. Could interact (ferrous form) with G-alpha(i) proteins (GTP-bound form). In terms of processing, phosphorylated during hypoxia by ERK1/ERK2. Phosphorylation regulates the heme pocket hexacoordination preventing the association of His-64 with the heme metal center. Thereby, promotes the access of dioxygen and nitrite to the heme and stimulates the nitrite reductase activity. Phosphorylation during hypoxia is stabilized by 14-3-3 proteins.

It is found in the cytoplasm. The protein resides in the cytosol. Its subcellular location is the mitochondrion matrix. The enzyme catalyses Fe(III)-heme b-[protein] + nitric oxide + H2O = Fe(II)-heme b-[protein] + nitrite + 2 H(+). Its function is as follows. Monomeric globin with a bis-histidyl six-coordinate heme-iron atom through which it can bind dioxygen, carbon monoxide and nitric oxide. Could help transport oxygen and increase its availability to the metabolically active neuronal tissues, though its low quantity in tissues as well as its high affinity for dioxygen, which may limit its oxygen-releasing ability, argue against it. The ferrous/deoxygenated form exhibits a nitrite reductase activity and it could produce nitric oxide which in turn inhibits cellular respiration in response to hypoxia. In its ferrous/deoxygenated state, it may also exhibit GDI (Guanine nucleotide Dissociation Inhibitor) activity toward heterotrimeric G-alpha proteins, thereby regulating signal transduction to facilitate neuroprotective responses in the wake of hypoxia and associated oxidative stress. The chain is Neuroglobin from Oryctolagus cuniculus (Rabbit).